Here is a 79-residue protein sequence, read N- to C-terminus: Small ribosomal subunit protein bS21A (79 aa).

The tract at residues 57-79 is disordered; that stretch reads LARKKLQREGLLPAPKKVLRPTR.

It belongs to the bacterial ribosomal protein bS21 family.

The chain is Small ribosomal subunit protein bS21A from Rhizobium johnstonii (strain DSM 114642 / LMG 32736 / 3841) (Rhizobium leguminosarum bv. viciae).